The primary structure comprises 336 residues: MPDDSTAPKRILSGAQPTGQLHLGNYLGAVRNWVSEQRQYDSYFCVVDLHALTVPQEAAELRAATRRTAALYLACGIDPERSTVFVQSHVSAHTELTWLFNCLTPINWLERMIQFKEKAIKLGEEVGIGLFDYPVLQAADILLYEPHLVPVGEDQRQHLELTRDIARRFNDRYGESLRVPEMLIRKEGARVMSLQDGTSKMSKSDPSDLSRLNLLDAPEKLRDKIKRAKSDAVMGLKFDPARPECTNLLTIYQLLSGESPEAVEARFADAGFGRFKPILADLVIEYLRPIRERYDAIAGESGYLEGILREGALRASKVAGLTLERIRDRMGLLPPF.

ATP is bound by residues 16 to 18 (QPT) and 24 to 25 (GN). Residues 17-25 (PTGQLHLGN) carry the 'HIGH' region motif. Asp-140 lines the L-tryptophan pocket. ATP is bound by residues 152–154 (GED), Val-191, and 200–204 (KMSKS). The 'KMSKS' region motif lies at 200-204 (KMSKS).

Belongs to the class-I aminoacyl-tRNA synthetase family. In terms of assembly, homodimer.

Its subcellular location is the cytoplasm. It carries out the reaction tRNA(Trp) + L-tryptophan + ATP = L-tryptophyl-tRNA(Trp) + AMP + diphosphate + H(+). Catalyzes the attachment of tryptophan to tRNA(Trp). This chain is Tryptophan--tRNA ligase, found in Gloeobacter violaceus (strain ATCC 29082 / PCC 7421).